The following is a 545-amino-acid chain: CTP synthase (545 aa).

The interval methionine 1–leucine 266 is amidoligase domain. Residue serine 14 participates in CTP binding. Serine 14 contacts UTP. ATP is bound by residues serine 15 to isoleucine 20 and aspartate 72. Aspartate 72 and glutamate 140 together coordinate Mg(2+). Residues aspartate 147–glutamate 149, lysine 187–glutamine 192, and lysine 223 contribute to the CTP site. UTP contacts are provided by residues lysine 187–glutamine 192 and lysine 223. Position 239–241 (lysine 239–valine 241) interacts with ATP. A Glutamine amidotransferase type-1 domain is found at valine 291 to asparagine 543. An L-glutamine-binding site is contributed by glycine 352. The active-site Nucleophile; for glutamine hydrolysis is cysteine 379. Residues leucine 380 to glutamine 383, glutamate 403, and arginine 471 each bind L-glutamine. Active-site residues include histidine 516 and glutamate 518.

Belongs to the CTP synthase family. In terms of assembly, homotetramer.

The enzyme catalyses UTP + L-glutamine + ATP + H2O = CTP + L-glutamate + ADP + phosphate + 2 H(+). It carries out the reaction L-glutamine + H2O = L-glutamate + NH4(+). The catalysed reaction is UTP + NH4(+) + ATP = CTP + ADP + phosphate + 2 H(+). It functions in the pathway pyrimidine metabolism; CTP biosynthesis via de novo pathway; CTP from UDP: step 2/2. With respect to regulation, allosterically activated by GTP, when glutamine is the substrate; GTP has no effect on the reaction when ammonia is the substrate. The allosteric effector GTP functions by stabilizing the protein conformation that binds the tetrahedral intermediate(s) formed during glutamine hydrolysis. Inhibited by the product CTP, via allosteric rather than competitive inhibition. In terms of biological role, catalyzes the ATP-dependent amination of UTP to CTP with either L-glutamine or ammonia as the source of nitrogen. Regulates intracellular CTP levels through interactions with the four ribonucleotide triphosphates. The protein is CTP synthase of Buchnera aphidicola subsp. Acyrthosiphon pisum (strain Tuc7).